The following is a 392-amino-acid chain: Gastricsin (392 aa).

Residues 1 to 16 form the signal peptide; sequence MKWMVVALLCLPLLEA. A propeptide spans 17–62 (activation peptide); it reads SLLRVPLRKMKSIRETMKEQGVLKDFLKTHKYDPGQKYHFGNFGDY. The Peptidase A1 domain maps to 76 to 389; it reads YFGEISIGTP…DMGNNKVGLA (314 aa). Asp-94 is a catalytic residue. 2 disulfide bridges follow: Cys-107/Cys-112 and Cys-270/Cys-275. Asp-280 is an active-site residue. Cys-314 and Cys-347 are joined by a disulfide.

Belongs to the peptidase A1 family.

It is found in the secreted. The enzyme catalyses More restricted specificity than pepsin A, but shows preferential cleavage at Tyr-|-Xaa bonds. High activity on hemoglobin.. Hydrolyzes a variety of proteins. The protein is Gastricsin (Pgc) of Rattus norvegicus (Rat).